The primary structure comprises 286 residues: Bifunctional protein FolD (286 aa).

NADP(+) contacts are provided by residues Gly-165–Ser-167 and Ser-190.

This sequence belongs to the tetrahydrofolate dehydrogenase/cyclohydrolase family. As to quaternary structure, homodimer.

The enzyme catalyses (6R)-5,10-methylene-5,6,7,8-tetrahydrofolate + NADP(+) = (6R)-5,10-methenyltetrahydrofolate + NADPH. It carries out the reaction (6R)-5,10-methenyltetrahydrofolate + H2O = (6R)-10-formyltetrahydrofolate + H(+). It participates in one-carbon metabolism; tetrahydrofolate interconversion. Its function is as follows. Catalyzes the oxidation of 5,10-methylenetetrahydrofolate to 5,10-methenyltetrahydrofolate and then the hydrolysis of 5,10-methenyltetrahydrofolate to 10-formyltetrahydrofolate. This chain is Bifunctional protein FolD, found in Burkholderia cenocepacia (strain ATCC BAA-245 / DSM 16553 / LMG 16656 / NCTC 13227 / J2315 / CF5610) (Burkholderia cepacia (strain J2315)).